Here is a 57-residue protein sequence, read N- to C-terminus: Lantibiotic nisin-A (57 aa).

Residues 1–23 (MSTKDFNLDLVSVSKKDSGASPR) constitute a propeptide that is removed on maturation. Thr25 carries the (Z)-2,3-didehydrobutyrine modification. The lanthionine (Ser-Cys) cross-link spans 26 to 30 (SISLC). Position 28 is a 2,3-didehydroalanine (Ser) (Ser28). 4 cross-links (beta-methyllanthionine (Thr-Cys)) span residues 31–34 (TPGC), 36–42 (TGALMGC), 46–49 (TATC), and 48–51 (TCHC). At Ser56 the chain carries 2,3-didehydroalanine (Ser).

Belongs to the type A lantibiotic family. In terms of processing, maturation of lantibiotics involves the enzymatic conversion of Thr, and Ser into dehydrated AA and the formation of thioether bonds with cysteine. This is followed by membrane translocation and cleavage of the modified precursor. The structure of the 2,3-didehydrobutyrine is not discussed in PubMed:8454055. However, in Fig. 1 the residue is diagrammed as the Z-isomer.

In terms of biological role, lanthionine-containing peptide antibiotic (lantibiotic) active on Gram-positive bacteria. The bactericidal activity of lantibiotics is based on depolarization of energized bacterial cytoplasmic membranes, initiated by the formation of aqueous transmembrane pores. This is Lantibiotic nisin-A (spaN) from Lactococcus lactis subsp. lactis (Streptococcus lactis).